Reading from the N-terminus, the 1074-residue chain is Probable arabinosyltransferase C (1074 aa).

Helical transmembrane passes span 15–37 (ARLV…PLLP), 214–236 (LLKL…ALHV), 251–273 (SRWW…WHFV), 415–437 (IIIG…ALLV), 452–474 (RFGY…FLIF), 516–538 (SVAR…AMTL), 573–595 (THQF…VAVT), 608–630 (FGAA…WYVS), 645–667 (FGFT…WFHF), and 684–706 (LLVA…SLTL).

It belongs to the emb family.

It localises to the cell membrane. Functionally, arabinosyl transferase responsible for the polymerization of arabinose into the arabinan of arabinogalactan. The protein is Probable arabinosyltransferase C (embC) of Mycolicibacterium smegmatis (Mycobacterium smegmatis).